The primary structure comprises 335 residues: Endo-beta-N-acetylglucosaminidase F2 (335 aa).

Positions Met-1–Ser-45 are cleaved as a signal peptide. Residues Gln-61–Pro-321 form the GH18 domain. O-linked (Man...) serine glycans are attached at residues Ser-73, Ser-89, and Ser-143. Catalysis depends on Glu-171, which acts as the Proton donor.

The protein belongs to the glycosyl hydrolase 18 family. Monomer. Carbohydrates at Ser-73, Ser-89 and Ser-143 consist of (2-OMe)Man1-4GlcNAcU1-4GlcU1-4Glc1-4(2-OMe)GlcU1-4[(2-OMe)Rham1-2]Man.

Its subcellular location is the secreted. The enzyme catalyses an N(4)-(oligosaccharide-(1-&gt;3)-[oligosaccharide-(1-&gt;6)]-beta-D-Man-(1-&gt;4)-beta-D-GlcNAc-(1-&gt;4)-alpha-D-GlcNAc)-L-asparaginyl-[protein] + H2O = an oligosaccharide-(1-&gt;3)-[oligosaccharide-(1-&gt;6)]-beta-D-Man-(1-&gt;4)-D-GlcNAc + N(4)-(N-acetyl-beta-D-glucosaminyl)-L-asparaginyl-[protein]. In terms of biological role, endohydrolysis of the di-N-acetylchitobiosyl unit in high-mannose glycopeptides and glycoproteins. Complex biantennary glycans are the preferred substrates. Tri- and tetraantennary glycans are not hydrolyzed, and high mannose glycans are very poor substrates. In Elizabethkingia meningoseptica (Chryseobacterium meningosepticum), this protein is Endo-beta-N-acetylglucosaminidase F2 (endOF2).